Consider the following 250-residue polypeptide: 5-oxoprolinase subunit A (250 aa).

Belongs to the LamB/PxpA family. As to quaternary structure, forms a complex composed of PxpA, PxpB and PxpC.

The catalysed reaction is 5-oxo-L-proline + ATP + 2 H2O = L-glutamate + ADP + phosphate + H(+). Functionally, catalyzes the cleavage of 5-oxoproline to form L-glutamate coupled to the hydrolysis of ATP to ADP and inorganic phosphate. In Staphylococcus aureus (strain MRSA252), this protein is 5-oxoprolinase subunit A.